A 278-amino-acid chain; its full sequence is MTGFGARLAEAKAHRGPLCLGIDPHPELLRAWDLPATADGLAAFCDICVAAFAGFAVVKPQVAFFEAYGAAGFAVLEGTMAALRANGVLVLADAKRGDIGSTMAAYAAAWAGDSPLAADAVTVSPFLGFGSLRPLLEVATANDRGVFVLAATSNPEGATIQRADADGRTVAQLIVDQVGLFNSEVGEVTGPEPGSVGVVVGATVLNPPDVSGLGGPVLVPGVGVQGGRPEALGGLGGAAPQQLLPAVSREVLRAGPSISEVRAAAERMLDSVAYLSAV.

Residue Lys95 is the Proton donor of the active site.

Belongs to the OMP decarboxylase family. Type 2 subfamily.

The catalysed reaction is orotidine 5'-phosphate + H(+) = UMP + CO2. Its pathway is pyrimidine metabolism; UMP biosynthesis via de novo pathway; UMP from orotate: step 2/2. The chain is Orotidine 5'-phosphate decarboxylase from Mycobacterium marinum (strain ATCC BAA-535 / M).